The following is a 170-amino-acid chain: ATP synthase subunit b (170 aa).

Residues 11-31 (AFTFGDAFFTLFAFAILLVLI) form a helical membrane-spanning segment.

This sequence belongs to the ATPase B chain family. As to quaternary structure, F-type ATPases have 2 components, F(1) - the catalytic core - and F(0) - the membrane proton channel. F(1) has five subunits: alpha(3), beta(3), gamma(1), delta(1), epsilon(1). F(0) has three main subunits: a(1), b(2) and c(10-14). The alpha and beta chains form an alternating ring which encloses part of the gamma chain. F(1) is attached to F(0) by a central stalk formed by the gamma and epsilon chains, while a peripheral stalk is formed by the delta and b chains.

Its subcellular location is the cell membrane. F(1)F(0) ATP synthase produces ATP from ADP in the presence of a proton or sodium gradient. F-type ATPases consist of two structural domains, F(1) containing the extramembraneous catalytic core and F(0) containing the membrane proton channel, linked together by a central stalk and a peripheral stalk. During catalysis, ATP synthesis in the catalytic domain of F(1) is coupled via a rotary mechanism of the central stalk subunits to proton translocation. Its function is as follows. Component of the F(0) channel, it forms part of the peripheral stalk, linking F(1) to F(0). The protein is ATP synthase subunit b of Listeria monocytogenes serotype 4b (strain F2365).